A 620-amino-acid polypeptide reads, in one-letter code: Chaperone protein HscA homolog (620 aa).

Belongs to the heat shock protein 70 family.

Functionally, chaperone involved in the maturation of iron-sulfur cluster-containing proteins. Has a low intrinsic ATPase activity which is markedly stimulated by HscB. The polypeptide is Chaperone protein HscA homolog (Neisseria meningitidis serogroup A / serotype 4A (strain DSM 15465 / Z2491)).